We begin with the raw amino-acid sequence, 380 residues long: Probable tRNA sulfurtransferase (380 aa).

A THUMP domain is found at 58–162 (EEVIERLKKV…MAFVYAGVIE (105 aa)). ATP-binding positions include 178–179 (LL), 203–204 (YF), Arg260, Gly282, and Gln291.

Belongs to the ThiI family.

It localises to the cytoplasm. The catalysed reaction is [ThiI sulfur-carrier protein]-S-sulfanyl-L-cysteine + a uridine in tRNA + 2 reduced [2Fe-2S]-[ferredoxin] + ATP + H(+) = [ThiI sulfur-carrier protein]-L-cysteine + a 4-thiouridine in tRNA + 2 oxidized [2Fe-2S]-[ferredoxin] + AMP + diphosphate. It carries out the reaction [ThiS sulfur-carrier protein]-C-terminal Gly-Gly-AMP + S-sulfanyl-L-cysteinyl-[cysteine desulfurase] + AH2 = [ThiS sulfur-carrier protein]-C-terminal-Gly-aminoethanethioate + L-cysteinyl-[cysteine desulfurase] + A + AMP + 2 H(+). It participates in cofactor biosynthesis; thiamine diphosphate biosynthesis. Its function is as follows. Catalyzes the ATP-dependent transfer of a sulfur to tRNA to produce 4-thiouridine in position 8 of tRNAs, which functions as a near-UV photosensor. Also catalyzes the transfer of sulfur to the sulfur carrier protein ThiS, forming ThiS-thiocarboxylate. This is a step in the synthesis of thiazole, in the thiamine biosynthesis pathway. The sulfur is donated as persulfide by IscS. This chain is Probable tRNA sulfurtransferase, found in Thermoanaerobacter sp. (strain X514).